Here is a 379-residue protein sequence, read N- to C-terminus: Dual-specificity RNA methyltransferase RlmN (379 aa).

Residue glutamate 95 is the Proton acceptor of the active site. Positions 101–345 (EETRGTLCVS…TTVRKTRGDD (245 aa)) constitute a Radical SAM core domain. A disulfide bridge links cysteine 108 with cysteine 350. [4Fe-4S] cluster contacts are provided by cysteine 115, cysteine 119, and cysteine 122. Residues 176 to 177 (GE), serine 208, 230 to 232 (SLH), and asparagine 307 each bind S-adenosyl-L-methionine. The active-site S-methylcysteine intermediate is the cysteine 350.

The protein belongs to the radical SAM superfamily. RlmN family. [4Fe-4S] cluster serves as cofactor.

It is found in the cytoplasm. It carries out the reaction adenosine(2503) in 23S rRNA + 2 reduced [2Fe-2S]-[ferredoxin] + 2 S-adenosyl-L-methionine = 2-methyladenosine(2503) in 23S rRNA + 5'-deoxyadenosine + L-methionine + 2 oxidized [2Fe-2S]-[ferredoxin] + S-adenosyl-L-homocysteine. The catalysed reaction is adenosine(37) in tRNA + 2 reduced [2Fe-2S]-[ferredoxin] + 2 S-adenosyl-L-methionine = 2-methyladenosine(37) in tRNA + 5'-deoxyadenosine + L-methionine + 2 oxidized [2Fe-2S]-[ferredoxin] + S-adenosyl-L-homocysteine. In terms of biological role, specifically methylates position 2 of adenine 2503 in 23S rRNA and position 2 of adenine 37 in tRNAs. m2A2503 modification seems to play a crucial role in the proofreading step occurring at the peptidyl transferase center and thus would serve to optimize ribosomal fidelity. This is Dual-specificity RNA methyltransferase RlmN from Burkholderia cenocepacia (strain HI2424).